The following is a 519-amino-acid chain: NADH dehydrogenase (519 aa).

Residues 1–183 (MVLEPQIKSQ…YLNGESFTSG (183 aa)) are membrane-binding. The segment at 184 to 519 (RMTVEEILAQ…TTPAESAAAK (336 aa)) is catalytic. Residue 210–241 (DVLVVGGGPAGASSAIYAARKGIRTGIVADRF) coordinates FAD. The cysteines at positions 337 and 340 are disulfide-linked. Position 349-379 (349-379 (DVAVIGGGNSGVEAAIDLAGIVNHVTVLEFM)) interacts with NAD(+). 469–479 (TNVPGVFAAGD) contributes to the FAD binding site.

It belongs to the class-II pyridine nucleotide-disulfide oxidoreductase family. In terms of assembly, homodimer. It depends on FAD as a cofactor.

It localises to the cell membrane. It carries out the reaction a ubiquinone + NADH + 5 H(+)(in) = a ubiquinol + NAD(+) + 4 H(+)(out). Transfer of electrons from NADH to the respiratory chain. The immediate electron acceptor for the enzyme is believed to be ubiquinone. The protein is NADH dehydrogenase (ahpF) of Ferdinandcohnia aciditolerans (strain JCM 32973 / CCTCC AB 2017280 / YN-1) (Bacillus aciditolerans).